Consider the following 205-residue polypeptide: GTP cyclohydrolase 1 (205 aa).

3 residues coordinate Zn(2+): Cys93, His96, and Cys166.

This sequence belongs to the GTP cyclohydrolase I family. Homomer.

The enzyme catalyses GTP + H2O = 7,8-dihydroneopterin 3'-triphosphate + formate + H(+). The protein operates within cofactor biosynthesis; 7,8-dihydroneopterin triphosphate biosynthesis; 7,8-dihydroneopterin triphosphate from GTP: step 1/1. The protein is GTP cyclohydrolase 1 of Mycobacterium leprae (strain Br4923).